We begin with the raw amino-acid sequence, 130 residues long: Small ribosomal subunit protein uS11 (130 aa).

Belongs to the universal ribosomal protein uS11 family. Part of the 30S ribosomal subunit. Interacts with proteins S7 and S18. Binds to IF-3.

Located on the platform of the 30S subunit, it bridges several disparate RNA helices of the 16S rRNA. Forms part of the Shine-Dalgarno cleft in the 70S ribosome. This chain is Small ribosomal subunit protein uS11, found in Shewanella halifaxensis (strain HAW-EB4).